The primary structure comprises 89 residues: Small ribosomal subunit protein uS17 (89 aa).

This sequence belongs to the universal ribosomal protein uS17 family. Part of the 30S ribosomal subunit.

Its function is as follows. One of the primary rRNA binding proteins, it binds specifically to the 5'-end of 16S ribosomal RNA. This is Small ribosomal subunit protein uS17 from Xylella fastidiosa (strain Temecula1 / ATCC 700964).